A 361-amino-acid polypeptide reads, in one-letter code: UDP-N-acetylglucosamine--N-acetylmuramyl-(pentapeptide) pyrophosphoryl-undecaprenol N-acetylglucosamine transferase (361 aa).

Ser-199 and Gln-290 together coordinate UDP-N-acetyl-alpha-D-glucosamine.

Belongs to the glycosyltransferase 28 family. MurG subfamily.

The protein localises to the cell membrane. It catalyses the reaction Mur2Ac(oyl-L-Ala-gamma-D-Glu-L-Lys-D-Ala-D-Ala)-di-trans,octa-cis-undecaprenyl diphosphate + UDP-N-acetyl-alpha-D-glucosamine = beta-D-GlcNAc-(1-&gt;4)-Mur2Ac(oyl-L-Ala-gamma-D-Glu-L-Lys-D-Ala-D-Ala)-di-trans,octa-cis-undecaprenyl diphosphate + UDP + H(+). It functions in the pathway cell wall biogenesis; peptidoglycan biosynthesis. Its function is as follows. Cell wall formation. Catalyzes the transfer of a GlcNAc subunit on undecaprenyl-pyrophosphoryl-MurNAc-pentapeptide (lipid intermediate I) to form undecaprenyl-pyrophosphoryl-MurNAc-(pentapeptide)GlcNAc (lipid intermediate II). The protein is UDP-N-acetylglucosamine--N-acetylmuramyl-(pentapeptide) pyrophosphoryl-undecaprenol N-acetylglucosamine transferase of Streptococcus mutans serotype c (strain ATCC 700610 / UA159).